Consider the following 397-residue polypeptide: Bifunctional enzyme IspD/IspF (397 aa).

The tract at residues 1 to 236 (MSIAAVILAA…QKKMQMFPDI (236 aa)) is 2-C-methyl-D-erythritol 4-phosphate cytidylyltransferase. The interval 237–397 (RTGNGYDVHS…NVLYPGEIPK (161 aa)) is 2-C-methyl-D-erythritol 2,4-cyclodiphosphate synthase. A divalent metal cation-binding residues include D243 and H245. 4-CDP-2-C-methyl-D-erythritol 2-phosphate is bound by residues 243–245 (DVH) and 269–270 (HS). H277 contacts a divalent metal cation. Residues 291–293 (DIG), 367–370 (TTNE), F374, and R377 contribute to the 4-CDP-2-C-methyl-D-erythritol 2-phosphate site.

The protein in the N-terminal section; belongs to the IspD/TarI cytidylyltransferase family. IspD subfamily. In the C-terminal section; belongs to the IspF family. Requires a divalent metal cation as cofactor.

The catalysed reaction is 2-C-methyl-D-erythritol 4-phosphate + CTP + H(+) = 4-CDP-2-C-methyl-D-erythritol + diphosphate. The enzyme catalyses 4-CDP-2-C-methyl-D-erythritol 2-phosphate = 2-C-methyl-D-erythritol 2,4-cyclic diphosphate + CMP. Its pathway is isoprenoid biosynthesis; isopentenyl diphosphate biosynthesis via DXP pathway; isopentenyl diphosphate from 1-deoxy-D-xylulose 5-phosphate: step 2/6. It participates in isoprenoid biosynthesis; isopentenyl diphosphate biosynthesis via DXP pathway; isopentenyl diphosphate from 1-deoxy-D-xylulose 5-phosphate: step 4/6. Its function is as follows. Bifunctional enzyme that catalyzes the formation of 4-diphosphocytidyl-2-C-methyl-D-erythritol from CTP and 2-C-methyl-D-erythritol 4-phosphate (MEP) (IspD), and catalyzes the conversion of 4-diphosphocytidyl-2-C-methyl-D-erythritol 2-phosphate (CDP-ME2P) to 2-C-methyl-D-erythritol 2,4-cyclodiphosphate (ME-CPP) with a corresponding release of cytidine 5-monophosphate (CMP) (IspF). The chain is Bifunctional enzyme IspD/IspF from Bartonella henselae (strain ATCC 49882 / DSM 28221 / CCUG 30454 / Houston 1) (Rochalimaea henselae).